An 833-amino-acid polypeptide reads, in one-letter code: Urease (833 aa).

Residues 395–833 enclose the Urease domain; the sequence is GALDVHVHYI…LPLTRRYFVY (439 aa). Ni(2+) is bound by residues His-400 and His-402. Residues His-402 and Ala-433 each contribute to the urea site. Residue Lys-483 coordinates Ni(2+). Lys-483 bears the N6-carboxylysine mark. Residues His-485 and His-512 each coordinate urea. Positions 512 and 538 each coordinate Ni(2+). His-586 acts as the Proton donor in catalysis. Position 626 (Asp-626) interacts with Ni(2+). A urea-binding site is contributed by Ala-629.

This sequence in the C-terminal section; belongs to the metallo-dependent hydrolases superfamily. Urease alpha subunit family. Homohexamer. Requires Ni(2+) as cofactor. In terms of processing, carboxylation allows a single lysine to coordinate two nickel ions.

The enzyme catalyses urea + 2 H2O + H(+) = hydrogencarbonate + 2 NH4(+). Its pathway is nitrogen metabolism; urea degradation; CO(2) and NH(3) from urea (urease route): step 1/1. With respect to regulation, the urease accessory proteins URE4, URE6 and URE7 are required for urease activity, URE7 supplying nickel for the functional urease. Plays a nutritional role via nitrogen acquisition in the environment. Contributes to the central nervous system invasion by enhancing yeast sequestration within microcapillary beds (such as within the brain) during hematogenous spread, thereby facilitating blood-to-brain invasion by C.neoformans. Affects fitness within the mammalian phagosome, promoting non-lytic exocytosis while delaying intracellular replication and thus reducing phagolysosomal membrane damage, events that could facilitate cryptococcal dissemination when transported inside macrophages. Urease activity is also associated with the regulation of key intracellular metabolic pathways, including melanin biosynthesis, polyamine biosynthesis, as well as intracellular levels of proline and reactive oxygen species. The polypeptide is Urease (Cryptococcus neoformans var. grubii serotype A (strain H99 / ATCC 208821 / CBS 10515 / FGSC 9487) (Filobasidiella neoformans var. grubii)).